Reading from the N-terminus, the 185-residue chain is dCTP deaminase (185 aa).

Residue K107–R112 coordinates dCTP. E133 functions as the Proton donor/acceptor in the catalytic mechanism. Positions 152, 166, and 176 each coordinate dCTP.

Belongs to the dCTP deaminase family. As to quaternary structure, homotrimer.

The enzyme catalyses dCTP + H2O + H(+) = dUTP + NH4(+). The protein operates within pyrimidine metabolism; dUMP biosynthesis; dUMP from dCTP (dUTP route): step 1/2. In terms of biological role, catalyzes the deamination of dCTP to dUTP. The polypeptide is dCTP deaminase (Nitratiruptor sp. (strain SB155-2)).